A 501-amino-acid chain; its full sequence is 5-beta-cholestane-3-alpha,7-alpha-diol 12-alpha-hydroxylase (501 aa).

A helical membrane pass occupies residues 1–21; that stretch reads MVLWGPVLGVLLVAIVGYLCL. Residue S326 is modified to Phosphoserine. C440 contributes to the heme binding site.

It belongs to the cytochrome P450 family. It depends on heme as a cofactor.

It localises to the endoplasmic reticulum membrane. The protein resides in the microsome membrane. It catalyses the reaction 7alpha-hydroxycholest-4-en-3-one + reduced [NADPH--hemoprotein reductase] + O2 = 7alpha,12alpha-dihydroxycholest-4-en-3-one + oxidized [NADPH--hemoprotein reductase] + H2O + H(+). The enzyme catalyses 5beta-cholestane-3alpha,7alpha-diol + reduced [NADPH--hemoprotein reductase] + O2 = 5beta-cholestane-3alpha,7alpha,12alpha-triol + oxidized [NADPH--hemoprotein reductase] + H2O + H(+). The catalysed reaction is chenodeoxycholate + reduced [NADPH--hemoprotein reductase] + O2 = cholate + oxidized [NADPH--hemoprotein reductase] + H2O + H(+). The protein operates within lipid metabolism; bile acid biosynthesis. Functionally, a cytochrome P450 monooxygenase involved in primary bile acid biosynthesis. Catalyzes the 12alpha-hydroxylation of 7alpha-hydroxy-4-cholesten-3-one, an intermediate metabolite in cholic acid biosynthesis. Controls biliary balance of cholic acid and chenodeoxycholic acid, ultimately regulating the intestinal absorption of dietary lipids. Mechanistically, uses molecular oxygen inserting one oxygen atom into a substrate, and reducing the second into a water molecule, with two electrons provided by NADPH via cytochrome P450 reductase (CPR; NADPH--hemoprotein reductase). This chain is 5-beta-cholestane-3-alpha,7-alpha-diol 12-alpha-hydroxylase (CYP8B1), found in Sus scrofa (Pig).